A 412-amino-acid polypeptide reads, in one-letter code: Double C2-like domain-containing protein beta (412 aa).

The negatively regulates targeting to plasma membrane stretch occupies residues 1–36 (MTLRRRGEKATISIQEHMAIDVCPGPIRPIKQISDY). A mediates interaction with DYNLT1 region spans residues 1-90 (MTLRRRGEKA…EDVDQLFGAY (90 aa)). Residues 38 to 123 (PRFPRGLPPT…PDADGYESDD (86 aa)) are disordered. Positions 49-73 (APRASAPPDAPARSPAATAGPRSPS) are enriched in low complexity. Pro residues predominate over residues 95 to 108 (GPSPGPSPVRPPAK). Residues 112-123 (DEPDADGYESDD) are compositionally biased toward acidic residues. C2 domains lie at 126–250 (ALGT…SICL) and 266–399 (ERGR…ERWH). Aspartate 157, aspartate 163, aspartate 218, aspartate 220, aspartate 297, aspartate 303, aspartate 357, aspartate 359, and aspartate 365 together coordinate Ca(2+). The segment at 257–375 (DKAEDKSLEE…FIGGVVLGIN (119 aa)) is mediates interaction with STXBP3. Serine 411 is subject to Phosphoserine.

As to quaternary structure, interacts with STX4; the interaction is calcium-dependent, increased by insulin and glucose, and mediates vesicle fusion with plasma membrane in pancreatic cells and adipocytes. Interacts with STXBP3; the interaction is direct, occurs at the cell membrane and regulates glucose-stimulated insulin secretion. Interacts with cytoplasmic dynein light chain DYNLT1. Interacts with the SNARE (soluble N-ethylmaleimide-sensitive factor attached protein receptor) complex composed of SNAP25, STX1A and VAMP2; the interaction is calcium-dependent and competitive with SYT1. May interact with UNC13A; the interaction mediates targeting to the plasma membrane. Requires Ca(2+) as cofactor. Expressed in brain; highly enriched in neurons.

The protein localises to the cytoplasm. Its subcellular location is the cytoplasmic granule. It is found in the cell membrane. In terms of biological role, calcium sensor which positively regulates SNARE-dependent fusion of vesicles with membranes. Binds phospholipids in a calcium-dependent manner and may act at the priming stage of fusion by modifying membrane curvature to stimulate fusion. Involved in calcium-triggered exocytosis in chromaffin cells and calcium-dependent spontaneous release of neurotransmitter in absence of action potentials in neuronal cells. Involved both in glucose-stimulated insulin secretion in pancreatic cells and insulin-dependent GLUT4 transport to the plasma membrane in adipocytes. The sequence is that of Double C2-like domain-containing protein beta (Doc2b) from Rattus norvegicus (Rat).